The sequence spans 565 residues: E3 ubiquitin-protein ligase ipaH7.8 (565 aa).

The tract at residues 1-22 (MFSVNNTHSSVSCSPSINSNST) is disordered. Residues 1 to 262 (MFSVNNTHSS…YHGPQIYFSM (262 aa)) are interaction with target proteins. Residues 9-22 (SSVSCSPSINSNST) are compositionally biased toward low complexity. 9 LRR repeats span residues 58–79 (QEAV…PKHI), 80–97 (SALI…KLPA), 98–119 (FLKE…PESL), 120–137 (TTLS…VLPN), 138–157 (HLTS…ALPE), 158–179 (KLKF…PDKL), 180–199 (EILC…SDRN), 202–223 (RQKE…FSQL), and 225–248 (SSYR…QRLT). Residues 263–270 (SDGQQNTL) form a linker region. An E3 ubiquitin-protein ligase catalytic domain region spans residues 271–565 (HRPLADAVTA…SENGSRLHHS (295 aa)). One can recognise an NEL domain in the interval 273-565 (PLADAVTAWF…SENGSRLHHS (293 aa)). Cys-357 serves as the catalytic Glycyl thioester intermediate.

The protein belongs to the LRR-containing bacterial E3 ligase family. In terms of processing, ubiquitinated in the presence of host E1 ubiquitin-activating enzyme, E2 ubiquitin-conjugating enzyme and ubiquitin.

The protein localises to the secreted. Its subcellular location is the host cytoplasm. It carries out the reaction S-ubiquitinyl-[E2 ubiquitin-conjugating enzyme]-L-cysteine + [acceptor protein]-L-lysine = [E2 ubiquitin-conjugating enzyme]-L-cysteine + N(6)-ubiquitinyl-[acceptor protein]-L-lysine.. It functions in the pathway protein modification; protein ubiquitination. Its function is as follows. E3 ubiquitin ligase effector protein that interferes with host's innate immunity. Functions to alter host cell physiology and promote bacterial survival in host tissues. Catalyzes ubiquitination of human gasdermins GSDMB and GSDMD, promoting their degradation by the proteasome, thereby preventing cell death. In contrast, activates host cell pyroptosis in mouse cells: catalyzes ubiquitination of mouse Nlrp1b allele 1 protein, releasing the cleaved C-terminal part of Nlrp1b, which polymerizes and forms the Nlrp1b inflammasome followed by host cell pyroptosis. Does not catalyze ubiquitination of mouse GSDMD. In Shigella flexneri, this protein is E3 ubiquitin-protein ligase ipaH7.8.